The following is a 665-amino-acid chain: MAHEMIGTQIVTERLVALLESGTEKVLLIDSRPFVEYNTSHILEAININCSKLMKRRLQQDKVLITELIQHSAKHKVDIDCSQKVVVYDQSSQDVASLSSDCFLTVLLGKLEKSFNSVHLLAGGFAEFSRCFPGLCEGKSTLVPTCISQPCLPVANIGPTRILPNLYLGCQRDVLNKELMQQNGIGYVLNASNTCPKPDFIPESHFLRVPVNDSFCEKILPWLDKSVDFIEKAKASNGCVLVHCLAGISRSATIAIAYIMKRMDMSLDEAYRFVKEKRPTISPNFNFLGQLLDYEKKIKNQTGASGPKSKLKLLHLEKPNEPVPAVSEGGQKSETPLSPPCADSATSEAAGQRPVHPASVPSVPSVQPSLLEDSPLVQALSGLHLSADRLEDSNKLKRSFSLDIKSVSYSASMAASLHGFSSSEDALEYYKPSTTLDGTNKLCQFSPVQELSEQTPETSPDKEEASIPKKLQTARPSDSQSKRLHSVRTSSSGTAQRSLLSPLHRSGSVEDNYHTSFLFGLSTSQQHLTKSAGLGLKGWHSDILAPQTSTPSLTSSWYFATESSHFYSASAIYGGSASYSAYSCSQLPTCGDQVYSVRRRQKPSDRADSRRSWHEESPFEKQFKRRSCQMEFGESIMSENRSREELGKVGSQSSFSGSMEIIEVS.

In terms of domain architecture, Rhodanese spans 22–137 (GTEKVLLIDS…FSRCFPGLCE (116 aa)). Position 55 is a (Microbial infection) N6-acetyllysine; by EIS (Lys-55). The Tyrosine-protein phosphatase domain occupies 158–300 (GPTRILPNLY…LLDYEKKIKN (143 aa)). The active-site Phosphocysteine intermediate is the Cys-244. Residues 321–368 (EPVPAVSEGGQKSETPLSPPCADSATSEAAGQRPVHPASVPSVPSVQP) are disordered. A compositionally biased stretch (low complexity) spans 354–368 (PVHPASVPSVPSVQP). At Ser-446 the chain carries Phosphoserine; by MAPK1. 2 stretches are compositionally biased toward polar residues: residues 449–458 (QELSEQTPET) and 487–499 (VRTSSSGTAQRSL). 2 disordered regions span residues 449–505 (QELS…PLHR) and 597–665 (VRRR…IEVS). The residue at position 501 (Ser-501) is a Phosphoserine. Residues 602–622 (KPSDRADSRRSWHEESPFEKQ) show a composition bias toward basic and acidic residues.

The protein belongs to the protein-tyrosine phosphatase family. Non-receptor class dual specificity subfamily. In terms of assembly, interacts with ARRB2. Phosphorylated at Ser-446 by MAPK1/ERK2, which prevents its degradation, and thereby stabilizes it and blocks JNK MAPK activity. In terms of processing, (Microbial infection) Acetylated at Lys-55 by the M.tuberculosis Eis protein; this leads to the inhibition of JNK-dependent autophagy, phagosome maturation, and ROS (reactive oxygen species) generation for enhanced intracellular survival of M.tuberculosis.

The protein localises to the cytoplasm. It is found in the nucleus. It localises to the cytoplasmic vesicle. It carries out the reaction O-phospho-L-tyrosyl-[protein] + H2O = L-tyrosyl-[protein] + phosphate. The catalysed reaction is O-phospho-L-seryl-[protein] + H2O = L-seryl-[protein] + phosphate. It catalyses the reaction O-phospho-L-threonyl-[protein] + H2O = L-threonyl-[protein] + phosphate. Its function is as follows. Dual specificity protein phosphatase involved in the inactivation of MAP kinases. Dephosphorylates MAPK10 bound to ARRB2. In Homo sapiens (Human), this protein is Dual specificity protein phosphatase 16 (DUSP16).